The sequence spans 453 residues: F-box/FBD/LRR-repeat protein At4g00160 (453 aa).

The 54-residue stretch at 15-68 (KDRISELPDALLIKILSFLPTKIVVATSVFSKQWRPLWKLVPNLEFDSEDYDDK) folds into the F-box domain. 6 LRR repeats span residues 89–111 (LESFRLEFESEKVDPVDIGLWVG), 165–190 (MKSLRTLHLELVSYKDESSIRNLLSG), 215–239 (VPSLKRLTINDDHDGQEFWGYVINA), 247–270 (IEDLRCPGFCLNAPELMEANIFDG), 282–307 (LTSVKRLLLNLSPWKITYPTGSIFYQ), and 331–358 (SPKLQVLKLTDNCVKFHKNGLPGGKWNE). Residues 355–406 (KWNEPKYVPECLLSHLETFVWRRFDWGREEEKEIATYILKNARRLNKATFST) enclose the FBD domain.

This is F-box/FBD/LRR-repeat protein At4g00160 from Arabidopsis thaliana (Mouse-ear cress).